Consider the following 103-residue polypeptide: Protein S100-A16 (103 aa).

The EF-hand 1; degenerate domain maps to 12-47 (VIVLVENFYKYVSKYSLVKNKISKSSFREMLQKELN). Positions 54–89 (GNRKAADKLIQNLDANHDGRISFDEYWTLIGGITGP) constitute an EF-hand 2 domain. Positions 67, 69, 71, 73, and 78 each coordinate Ca(2+).

This sequence belongs to the S-100 family. Homodimer. Interacts with TP53. Ubiquitous. Highly expressed in esophagus, adipose tissues and colon. Expressed at lower level in lung, brain, pancreas and skeletal muscle. Expression is up-regulated in tumors of bladder, lung, thyroid gland, pancreas and ovary. Expressed in astrocytes.

The protein resides in the nucleus. Its subcellular location is the nucleolus. The protein localises to the cytoplasm. Calcium-binding protein. Binds one calcium ion per monomer. Can promote differentiation of adipocytes (in vitro). Overexpression in preadipocytes increases their proliferation, enhances adipogenesis and reduces insulin-stimulated glucose uptake. This chain is Protein S100-A16, found in Homo sapiens (Human).